Reading from the N-terminus, the 668-residue chain is tRNA 5-methylaminomethyl-2-thiouridine biosynthesis bifunctional protein MnmC (668 aa).

Residues 1–245 (MKHYSIQPAN…KREMLCGVME (245 aa)) form a tRNA (mnm(5)s(2)U34)-methyltransferase region. The tract at residues 270–668 (IGGGIACALL…LLKGKAVKAG (399 aa)) is FAD-dependent cmnm(5)s(2)U34 oxidoreductase.

In the N-terminal section; belongs to the methyltransferase superfamily. tRNA (mnm(5)s(2)U34)-methyltransferase family. It in the C-terminal section; belongs to the DAO family. It depends on FAD as a cofactor.

The protein localises to the cytoplasm. The catalysed reaction is 5-aminomethyl-2-thiouridine(34) in tRNA + S-adenosyl-L-methionine = 5-methylaminomethyl-2-thiouridine(34) in tRNA + S-adenosyl-L-homocysteine + H(+). Catalyzes the last two steps in the biosynthesis of 5-methylaminomethyl-2-thiouridine (mnm(5)s(2)U) at the wobble position (U34) in tRNA. Catalyzes the FAD-dependent demodification of cmnm(5)s(2)U34 to nm(5)s(2)U34, followed by the transfer of a methyl group from S-adenosyl-L-methionine to nm(5)s(2)U34, to form mnm(5)s(2)U34. The chain is tRNA 5-methylaminomethyl-2-thiouridine biosynthesis bifunctional protein MnmC from Shigella boydii serotype 18 (strain CDC 3083-94 / BS512).